The sequence spans 139 residues: Membrane protein YqfB (139 aa).

A helical membrane pass occupies residues D3–G23. Residues K25–R87 form a disordered region. Residues N62–V97 are a coiled coil. Basic and acidic residues predominate over residues E65–R87.

It localises to the cell membrane. This Bacillus subtilis (strain 168) protein is Membrane protein YqfB (yqfB).